A 189-amino-acid polypeptide reads, in one-letter code: Nucleoside diphosphate kinase 6 (189 aa).

ATP contacts are provided by Lys19, Phe68, Arg96, Thr102, Arg116, and Asn126. His129 serves as the catalytic Pros-phosphohistidine intermediate.

This sequence belongs to the NDK family. Mg(2+) serves as cofactor.

It carries out the reaction a 2'-deoxyribonucleoside 5'-diphosphate + ATP = a 2'-deoxyribonucleoside 5'-triphosphate + ADP. The catalysed reaction is a ribonucleoside 5'-diphosphate + ATP = a ribonucleoside 5'-triphosphate + ADP. Its function is as follows. Major role in the synthesis of nucleoside triphosphates other than ATP. The ATP gamma phosphate is transferred to the NDP beta phosphate via a ping-pong mechanism, using a phosphorylated active-site intermediate. The chain is Nucleoside diphosphate kinase 6 (Nme6) from Mus musculus (Mouse).